A 130-amino-acid chain; its full sequence is MTRSSVLADALNAINNAEKTGKRQVLIRPSSKVIIKFLQVMQKHGYIGEFEYIDDHRSGKIVVQLNGRLNKCGVISPRFNVKIGDIEKWTANLLPARQFGYVILTTSAGIMDHEEARRKHVSGKILGFVY.

The protein belongs to the universal ribosomal protein uS8 family. As to quaternary structure, component of the small ribosomal subunit (SSU). Mature yeast ribosomes consist of a small (40S) and a large (60S) subunit. The 40S small subunit contains 1 molecule of ribosomal RNA (18S rRNA) and 33 different proteins (encoded by 57 genes). The large 60S subunit contains 3 rRNA molecules (25S, 5.8S and 5S rRNA) and 46 different proteins (encoded by 81 genes).

Its subcellular location is the cytoplasm. Its function is as follows. Component of the ribosome, a large ribonucleoprotein complex responsible for the synthesis of proteins in the cell. The small ribosomal subunit (SSU) binds messenger RNAs (mRNAs) and translates the encoded message by selecting cognate aminoacyl-transfer RNA (tRNA) molecules. The large subunit (LSU) contains the ribosomal catalytic site termed the peptidyl transferase center (PTC), which catalyzes the formation of peptide bonds, thereby polymerizing the amino acids delivered by tRNAs into a polypeptide chain. The nascent polypeptides leave the ribosome through a tunnel in the LSU and interact with protein factors that function in enzymatic processing, targeting, and the membrane insertion of nascent chains at the exit of the ribosomal tunnel. In Saccharomyces cerevisiae (strain ATCC 204508 / S288c) (Baker's yeast), this protein is Small ribosomal subunit protein uS8A.